The sequence spans 325 residues: D site-binding protein (325 aa).

Disordered regions lie at residues 1–98 (MARP…AGPS), 124–203 (LEHG…EVLM), and 230–256 (FSEE…QKDE). The segment covering 17–28 (GPAGAPPGGGAL) has biased composition (gly residues). Residues 71 to 80 (AGPADAPSGA) are compositionally biased toward low complexity. Phosphoserine is present on serine 86. Residues 88-98 (RGRSGPVAGPS) are compositionally biased toward low complexity. A compositionally biased stretch (pro residues) spans 129 to 153 (PPSPPPPGGLSPAPSPARTPAPSPG). Over residues 154-171 (PGSCSSSSPRSSPGHAPA) the composition is skewed to low complexity. Positions 255–318 (DEKYWSRRYK…SHYRAVLSRY (64 aa)) constitute a bZIP domain. Residues 257 to 279 (KYWSRRYKNNEAAKRSRDARRLK) are basic motif. Residues 283-297 (ISVRAAFLEKENALL) form a leucine-zipper region.

Belongs to the bZIP family. PAR subfamily. As to quaternary structure, binds DNA as a homodimer or a heterodimer. Can form a heterodimer with TEF. Expressed in the suprachiasmatic nuclei (SCN) and in most peripheral tissues, with a strong circadian rhythmicity.

Its subcellular location is the nucleus. Functionally, this transcriptional activator recognizes and binds to the sequence 5'-RTTAYGTAAY-3' found in the promoter of genes such as albumin, CYP2A4 and CYP2A5. It is not essential for circadian rhythm generation, but modulates important clock output genes. May be a direct target for regulation by the circadian pacemaker component clock. May affect circadian period and sleep regulation. The sequence is that of D site-binding protein (Dbp) from Mus musculus (Mouse).